We begin with the raw amino-acid sequence, 126 residues long: Holo-[acyl-carrier-protein] synthase (126 aa).

Residues Asp-9 and Glu-58 each coordinate Mg(2+).

This sequence belongs to the P-Pant transferase superfamily. AcpS family. Mg(2+) is required as a cofactor.

The protein localises to the cytoplasm. It carries out the reaction apo-[ACP] + CoA = holo-[ACP] + adenosine 3',5'-bisphosphate + H(+). Functionally, transfers the 4'-phosphopantetheine moiety from coenzyme A to a Ser of acyl-carrier-protein. The polypeptide is Holo-[acyl-carrier-protein] synthase (Escherichia coli O17:K52:H18 (strain UMN026 / ExPEC)).